A 414-amino-acid polypeptide reads, in one-letter code: MQSQRIPGRKRGRPSLHSTPMKMAVHNLYSASAGSLPAVKIPKKRGRKPGYKIKSRVLMTPLALSPPRSTPEPDLSSIPQDAATVPSLAAPQALTVCLYINKQANAGPYLERKKVQQLPEHFGPERPSAVLQQAVQACIDCAHQQKLVFSLVKQGYGGEMVSVSASFDGKQHLRSLPVVNSIGYVLRFLAKLCRSLLCDDLFSHQPFPRGCSASEKVQEKEEGRMESVKTVTTEEYLVNPVGMNRYSVDTSASTFNHRGSLHPSSSLYCKRQNSGDSHLGGGPAATAGGPRTSPMSSGGPSAPGLRPPASSPKRNTTSLEGNRCASSPSQDAQDARRPRSRNPSAWTVEDVVWFVKDADPQALGPHVELFRKHEIDGNALLLLKSDMVMKYLGLKLGPALKLCYHIDKLKQAKF.

Phosphoserine occurs at positions 55 and 65. Residues H257–D276 are compositionally biased toward polar residues. A disordered region spans residues H257 to P343. Residues A284–G304 show a composition bias toward low complexity. One can recognise an SAM domain in the interval G288 to F354. A compositionally biased stretch (polar residues) spans P312–A332.

The protein belongs to the SCM family.

It is found in the nucleus. Its function is as follows. Putative Polycomb group (PcG) protein. PcG proteins act by forming multiprotein complexes, which are required to maintain the transcriptionally repressive state of homeotic genes throughout development. The chain is Sex comb on midleg-like protein 4 (SCML4) from Homo sapiens (Human).